Reading from the N-terminus, the 842-residue chain is Translation initiation factor IF-2 (842 aa).

Disordered regions lie at residues 1-41 (MVAK…GFPD) and 112-219 (RPNR…QTYQ). Composition is skewed to basic and acidic residues over residues 32–41 (PEDKKQGFPD) and 153–165 (RRGE…RDFS). The tr-type G domain maps to 328 to 497 (ARPPVVTVMG…MLQAEVMELR (170 aa)). The segment at 337-344 (GHVDHGKT) is G1. Position 337-344 (337-344 (GHVDHGKT)) interacts with GTP. The segment at 362 to 366 (GITQH) is G2. The interval 383–386 (DTPG) is G3. GTP contacts are provided by residues 383–387 (DTPGH) and 437–440 (NKID). Positions 437 to 440 (NKID) are G4. Residues 473-475 (SAL) are G5.

This sequence belongs to the TRAFAC class translation factor GTPase superfamily. Classic translation factor GTPase family. IF-2 subfamily.

It is found in the cytoplasm. One of the essential components for the initiation of protein synthesis. Protects formylmethionyl-tRNA from spontaneous hydrolysis and promotes its binding to the 30S ribosomal subunits. Also involved in the hydrolysis of GTP during the formation of the 70S ribosomal complex. In Treponema pallidum (strain Nichols), this protein is Translation initiation factor IF-2 (infB).